Reading from the N-terminus, the 177-residue chain is Adenine phosphoribosyltransferase (177 aa).

The protein belongs to the purine/pyrimidine phosphoribosyltransferase family. In terms of assembly, homodimer.

It localises to the cytoplasm. The enzyme catalyses AMP + diphosphate = 5-phospho-alpha-D-ribose 1-diphosphate + adenine. It functions in the pathway purine metabolism; AMP biosynthesis via salvage pathway; AMP from adenine: step 1/1. Its function is as follows. Catalyzes a salvage reaction resulting in the formation of AMP, that is energically less costly than de novo synthesis. The chain is Adenine phosphoribosyltransferase from Rhodococcus jostii (strain RHA1).